We begin with the raw amino-acid sequence, 107 residues long: Small ribosomal subunit protein uS17 (107 aa).

Belongs to the universal ribosomal protein uS17 family. Part of the 30S ribosomal subunit.

Its function is as follows. One of the primary rRNA binding proteins, it binds specifically to the 5'-end of 16S ribosomal RNA. The sequence is that of Small ribosomal subunit protein uS17 from Thermotoga maritima (strain ATCC 43589 / DSM 3109 / JCM 10099 / NBRC 100826 / MSB8).